Consider the following 551-residue polypeptide: Urocanate hydratase (551 aa).

NAD(+) contacts are provided by residues 48-49, Q126, 172-174, E192, R197, 238-239, 259-263, 269-270, and Y318; these read GG, GMG, NA, QTSAH, and YI. C406 is an active-site residue. G488 is an NAD(+) binding site.

Belongs to the urocanase family. The cofactor is NAD(+).

The protein localises to the cytoplasm. The catalysed reaction is 4-imidazolone-5-propanoate = trans-urocanate + H2O. Its pathway is amino-acid degradation; L-histidine degradation into L-glutamate; N-formimidoyl-L-glutamate from L-histidine: step 2/3. In terms of biological role, catalyzes the conversion of urocanate to 4-imidazolone-5-propionate. This Symbiobacterium thermophilum (strain DSM 24528 / JCM 14929 / IAM 14863 / T) protein is Urocanate hydratase.